The sequence spans 347 residues: tRNA N6-adenosine threonylcarbamoyltransferase (347 aa).

2 residues coordinate Fe cation: His110 and His114. Substrate is bound by residues 133–137 (VVSGG), Asp168, Gly181, Asp185, and Asn277. Asp305 is a Fe cation binding site.

This sequence belongs to the KAE1 / TsaD family. Fe(2+) is required as a cofactor.

It is found in the cytoplasm. It catalyses the reaction L-threonylcarbamoyladenylate + adenosine(37) in tRNA = N(6)-L-threonylcarbamoyladenosine(37) in tRNA + AMP + H(+). Its function is as follows. Required for the formation of a threonylcarbamoyl group on adenosine at position 37 (t(6)A37) in tRNAs that read codons beginning with adenine. Is involved in the transfer of the threonylcarbamoyl moiety of threonylcarbamoyl-AMP (TC-AMP) to the N6 group of A37, together with TsaE and TsaB. TsaD likely plays a direct catalytic role in this reaction. The polypeptide is tRNA N6-adenosine threonylcarbamoyltransferase (Kineococcus radiotolerans (strain ATCC BAA-149 / DSM 14245 / SRS30216)).